A 321-amino-acid polypeptide reads, in one-letter code: Protein ZAR1-like (321 aa).

Residues 110–214 form a disordered region; the sequence is RTLSSCSPWD…GDAASEPLRR (105 aa). Over residues 145–154 the composition is skewed to basic and acidic residues; sequence LRRDGDEAES. The 3CxxC-type zinc-finger motif lies at 222–307; sequence PKYGYFHCKD…QELCGRCKDK (86 aa).

Belongs to the ZAR1 family. Interacts with YBX2.

It localises to the cytoplasm. Its subcellular location is the cytoplasmic ribonucleoprotein granule. MRNA-binding protein required for maternal mRNA storage, translation and degradation during oocyte maturation. Probably promotes formation of some phase-separated membraneless compartment that stores maternal mRNAs in oocytes: acts by undergoing liquid-liquid phase separation upon binding to maternal mRNAs. Binds to the 3'-UTR of maternal mRNAs, inhibiting their translation. This is Protein ZAR1-like from Homo sapiens (Human).